The following is a 135-amino-acid chain: Small ribosomal subunit protein uS11 (135 aa).

The tract at residues 1–20 (MGRQRQQRSRGSRSRRRVRK) is disordered.

The protein belongs to the universal ribosomal protein uS11 family. As to quaternary structure, part of the 30S ribosomal subunit. Interacts with proteins S7 and S18. Binds to IF-3.

Functionally, located on the platform of the 30S subunit, it bridges several disparate RNA helices of the 16S rRNA. Forms part of the Shine-Dalgarno cleft in the 70S ribosome. This chain is Small ribosomal subunit protein uS11, found in Rubrobacter xylanophilus (strain DSM 9941 / JCM 11954 / NBRC 16129 / PRD-1).